The chain runs to 411 residues: Lysosome-associated membrane glycoprotein 2 (411 aa).

Residues 1–26 form the signal peptide; it reads MRLLSPVTGSKLVLLFLFLGAVRSDA. The segment at 27-188 is first lumenal domain; the sequence is LKLNLTDSKG…SKHEQVCKED (162 aa). Topologically, residues 27-376 are lumenal; that stretch reads LKLNLTDSKG…QDCSADEDNF (350 aa). The cysteines at positions 38 and 75 are disulfide-linked. N-linked (GlcNAc...) asparagine glycosylation is found at Asn46, Asn57, Asn71, Asn97, Asn109, Asn117, Asn175, Asn223, Asn230, Asn243, Asn261, Asn276, Asn308, Asn318, and Asn357. An intrachain disulfide couples Cys149 to Cys185. Residues 189–229 form a hinge region; sequence KTATTVAPIIHTTVPSPTTTLTPTSIPVPTPTVGNYTISNG. The tract at residues 230–376 is second lumenal domain; that stretch reads NATCLLATMG…QDCSADEDNF (147 aa). The cysteines at positions 233 and 266 are disulfide-linked. Cysteines 332 and 369 form a disulfide. A helical membrane pass occupies residues 377–400; it reads LVPIAVGAALGGVLILVLLAYFIG. Residues 401–411 lie on the Cytoplasmic side of the membrane; that stretch reads LKRHHTGYEQF. The interval 402-405 is important for binding and subsequent lysosomal degradation of target proteins; the sequence is KRHH.

The protein belongs to the LAMP family. Monomer. Forms large homooligomers. Interacts (via its cytoplasmic region) with HSPA8; HSPA8 mediates recruitment of proteins with a KFERQ motif to the surface of the lysosome for chaperone-mediated autophagy. Interacts with HSP90 in the lysosome lumen; this enhances LAMP2 stability. Interacts with MLLT11. Interacts with ABCB9. Interacts with FURIN. Interacts with CT55; this interaction may be important for LAMP2 protein stability. Interacts with TMEM175; inhibiting the proton channel activity of TMEM175. Forms a ternary complex with RAB7A and RUFY4 (via RUN domain); the interaction with RAB7A is mediated by RUFY4 (via RUN and coiled coil domains). Post-translationally, extensively N-glycosylated. Contains a minor proportion of O-linked glycans. Contains sialylated glycans. Detected in liver, kidney, spleen and macrophages (at protein level).

Its subcellular location is the lysosome membrane. The protein resides in the endosome membrane. The protein localises to the cell membrane. It is found in the cytoplasmic vesicle. It localises to the autophagosome membrane. In terms of biological role, lysosomal membrane glycoprotein which plays an important role in lysosome biogenesis, lysosomal pH regulation and autophagy. Acts as an important regulator of lysosomal lumen pH regulation by acting as a direct inhibitor of the proton channel TMEM175, facilitating lysosomal acidification for optimal hydrolase activity. Plays an important role in chaperone-mediated autophagy, a process that mediates lysosomal degradation of proteins in response to various stresses and as part of the normal turnover of proteins with a long biological half-live. Functions by binding target proteins, such as GAPDH, NLRP3 and MLLT11, and targeting them for lysosomal degradation. In the chaperone-mediated autophagy, acts downstream of chaperones, such as HSPA8/HSC70, which recognize and bind substrate proteins and mediate their recruitment to lysosomes, where target proteins bind LAMP2. Plays a role in lysosomal protein degradation in response to starvation. Required for the fusion of autophagosomes with lysosomes during autophagy. Cells that lack LAMP2 express normal levels of VAMP8, but fail to accumulate STX17 on autophagosomes, which is the most likely explanation for the lack of fusion between autophagosomes and lysosomes. Required for normal degradation of the contents of autophagosomes. Required for efficient MHC class II-mediated presentation of exogenous antigens via its function in lysosomal protein degradation; antigenic peptides generated by proteases in the endosomal/lysosomal compartment are captured by nascent MHC II subunits. Is not required for efficient MHC class II-mediated presentation of endogenous antigens. The sequence is that of Lysosome-associated membrane glycoprotein 2 (Lamp2) from Rattus norvegicus (Rat).